We begin with the raw amino-acid sequence, 204 residues long: LexA repressor (204 aa).

Positions 29 to 49 (VREIGDAVGLMSSSTVHGHLQ) form a DNA-binding region, H-T-H motif. Residues Ser127 and Lys164 each act as for autocatalytic cleavage activity in the active site.

The protein belongs to the peptidase S24 family. As to quaternary structure, homodimer.

The enzyme catalyses Hydrolysis of Ala-|-Gly bond in repressor LexA.. Functionally, represses a number of genes involved in the response to DNA damage (SOS response), including recA and lexA. In the presence of single-stranded DNA, RecA interacts with LexA causing an autocatalytic cleavage which disrupts the DNA-binding part of LexA, leading to derepression of the SOS regulon and eventually DNA repair. The polypeptide is LexA repressor (Desulfitobacterium hafniense (strain DSM 10664 / DCB-2)).